Here is a 420-residue protein sequence, read N- to C-terminus: Torsin-4A (420 aa).

A helical membrane pass occupies residues 130–150; the sequence is CLLLFIAIVCFQIFNAIENLD. 202 to 209 contacts ATP; it reads GPSGVGKS.

This sequence belongs to the ClpA/ClpB family. Torsin subfamily.

It localises to the membrane. The sequence is that of Torsin-4A (tor4a) from Xenopus tropicalis (Western clawed frog).